Here is a 570-residue protein sequence, read N- to C-terminus: MSEKHPGPLVVEGKLSDAERMKLESNYLRGTIAEDLNDGLTGGFKGDNFLLIRFHGMYQQDDRDIRAERAAQKLEPRHAMLLRCRLPGGVITTTQWQAIDKFAADNTIYGSIRLTNRQTFQFHGILKKNVKPVHQMLHSVGLDALATANDMNRNVLCTSNPYESQLHAEAYEWAKKISEHLLPRTRAYAEIWLDQEKVATTDEEPILGQTYLPRKFKTTVVIPPQNDIDLHANDMNFVAIAENGKLVGFNLLVGGGLSIEHGNKKTYARTASEFGYLPLEHTLAVAEAVVTTQRDWGNRTDRKNAKTKYTLERVGLETFKAEVERRAGIKFEPIRPYEFTGRGDRIGWVKGIDNNWHLTLFIENGRILDYPGRPLKTGLLEIAKIHQGEFRITANQNLIIASVPESQKAKIETLARDHGLMNAVSAQRENSMACVSFPTCPLAMAEAERFLPSFTDKVEAILEKHGIPDEHIVMRVTGCPNGCGRAMLAEIGLVGKAPGRYNLHLGGNRIGTRIPRMYKENITEPDILASLGELIGRWAKEREAGEGFGDFTVRAGIIRPVLDPARDFWE.

Residues Cys434, Cys440, Cys479, and Cys483 each contribute to the [4Fe-4S] cluster site. A siroheme-binding site is contributed by Cys483.

It belongs to the nitrite and sulfite reductase 4Fe-4S domain family. As to quaternary structure, alpha(8)-beta(8). The alpha component is a flavoprotein, the beta component is a hemoprotein. Siroheme is required as a cofactor. [4Fe-4S] cluster serves as cofactor.

It catalyses the reaction hydrogen sulfide + 3 NADP(+) + 3 H2O = sulfite + 3 NADPH + 4 H(+). It functions in the pathway sulfur metabolism; hydrogen sulfide biosynthesis; hydrogen sulfide from sulfite (NADPH route): step 1/1. Component of the sulfite reductase complex that catalyzes the 6-electron reduction of sulfite to sulfide. This is one of several activities required for the biosynthesis of L-cysteine from sulfate. In Salmonella heidelberg (strain SL476), this protein is Sulfite reductase [NADPH] hemoprotein beta-component.